The sequence spans 112 residues: Abdominal ganglion neuropeptides L5-67 (112 aa).

The signal sequence occupies residues 1–23 (MKTAVLLVCLAYVMAAILSLCAS). Phe-33 is subject to Phenylalanine amide.

The prohormone is proteolytically cleaved in 2 steps, yielding first 2 products: luqin and PRMP. In the second step, PRMP is cleaved to yield luqin-B and luqin-C. In terms of tissue distribution, neurons L2-4 and L6, also called giant dorsal LUQ (Left Upper Quadrant) neurons of the abdominal ganglion. Also expressed in smaller neurons in the CNS and in peripheral organs such as the kidney.

Its subcellular location is the secreted. This Aplysia californica (California sea hare) protein is Abdominal ganglion neuropeptides L5-67.